Consider the following 363-residue polypeptide: 1-aminocyclopropane-1-carboxylate oxidase homolog (363 aa).

Residues 212–312 (FHLFCSCNYY…MSITCFFGES (101 aa)) enclose the Fe2OG dioxygenase domain. The Fe cation site is built by His-236, Asp-238, and His-292.

Belongs to the iron/ascorbate-dependent oxidoreductase family.

The chain is 1-aminocyclopropane-1-carboxylate oxidase homolog (ACO3) from Solanum lycopersicum (Tomato).